Consider the following 582-residue polypeptide: Inactive metallocarboxypeptidase ECM14 (582 aa).

Positions 1–20 (MHILQVITGATLVSVPFVSA) are cleaved as a signal peptide. Residues 21 to 172 (IPSSTSEFLP…QAVYESYPQP (152 aa)) constitute a propeptide that is removed on maturation. The region spanning 200–522 (DYQPLSVIIP…NAVLVFGQFL (323 aa)) is the Peptidase M14 domain. Zn(2+) contacts are provided by His265 and Glu268. Substrate contacts are provided by residues 265 to 268 (HARE), Arg323, and 340 to 341 (DR). Residues Cys334 and Cys357 are joined by a disulfide bond. N-linked (GlcNAc...) asparagine glycosylation is found at Asn381 and Asn387. His397 serves as a coordination point for Zn(2+). Position 398 to 399 (398 to 399 (SY)) interacts with substrate. Residues 561-571 (SNQLEDDDNEN) are compositionally biased toward acidic residues. The disordered stretch occupies residues 561 to 582 (SNQLEDDDNENDTLLGFRTQKV). N-linked (GlcNAc...) asparagine glycosylation is present at Asn571.

This sequence belongs to the peptidase M14 family. Requires Zn(2+) as cofactor.

It is found in the vacuole. The protein resides in the secreted. In terms of biological role, inactive carboxypeptidase that may play a role in cell wall organization and biogenesis. This is Inactive metallocarboxypeptidase ECM14 (ECM14) from Coccidioides posadasii (strain RMSCC 757 / Silveira) (Valley fever fungus).